A 202-amino-acid chain; its full sequence is Osteoclast-stimulating factor 1 (202 aa).

The region spanning 12 to 71 (GQVKVFRALYTFEPRTPDELYFEEGDIIYISDMSDTNWWKGTCKGRTGLIPSNYVAEQAE) is the SH3 domain. ANK repeat units follow at residues 72–101 (SIDN…GVNG), 105–135 (AGNT…ELNQ), and 139–168 (LGDT…RTDL).

It is found in the cytoplasm. In terms of biological role, induces bone resorption, acting probably through a signaling cascade which results in the secretion of factor(s) enhancing osteoclast formation and activity. This chain is Osteoclast-stimulating factor 1 (OSTF1), found in Gallus gallus (Chicken).